The chain runs to 451 residues: Serine--tRNA ligase (451 aa).

247–249 is a binding site for L-serine; it reads TAE. Residues 278 to 280 and Val-294 contribute to the ATP site; that span reads RKE. L-serine is bound at residue Glu-301. An ATP-binding site is contributed by 365-368; that stretch reads ELAS. Thr-400 is a binding site for L-serine.

It belongs to the class-II aminoacyl-tRNA synthetase family. Type-1 seryl-tRNA synthetase subfamily. In terms of assembly, homodimer. The tRNA molecule binds across the dimer.

The protein resides in the cytoplasm. The enzyme catalyses tRNA(Ser) + L-serine + ATP = L-seryl-tRNA(Ser) + AMP + diphosphate + H(+). It catalyses the reaction tRNA(Sec) + L-serine + ATP = L-seryl-tRNA(Sec) + AMP + diphosphate + H(+). The protein operates within aminoacyl-tRNA biosynthesis; selenocysteinyl-tRNA(Sec) biosynthesis; L-seryl-tRNA(Sec) from L-serine and tRNA(Sec): step 1/1. Catalyzes the attachment of serine to tRNA(Ser). Is also able to aminoacylate tRNA(Sec) with serine, to form the misacylated tRNA L-seryl-tRNA(Sec), which will be further converted into selenocysteinyl-tRNA(Sec). The polypeptide is Serine--tRNA ligase (Pyrobaculum aerophilum (strain ATCC 51768 / DSM 7523 / JCM 9630 / CIP 104966 / NBRC 100827 / IM2)).